The primary structure comprises 1138 residues: Pesticidal crystal protein Cry7Ab (1138 aa).

The protein belongs to the delta endotoxin family.

In terms of biological role, promotes colloidosmotic lysis by binding to the midgut epithelial cells of Coleoptera. In Bacillus thuringiensis serovar kumamotoensis, this protein is Pesticidal crystal protein Cry7Ab (cry7Ab).